We begin with the raw amino-acid sequence, 244 residues long: Probable 2-phosphosulfolactate phosphatase (244 aa).

The protein belongs to the ComB family. Mg(2+) serves as cofactor.

It carries out the reaction (2R)-O-phospho-3-sulfolactate + H2O = (2R)-3-sulfolactate + phosphate. The polypeptide is Probable 2-phosphosulfolactate phosphatase (Cyanothece sp. (strain PCC 7425 / ATCC 29141)).